The sequence spans 70 residues: uncharacterized protein (70 aa).

Residues 15–37 traverse the membrane as a helical segment; that stretch reads IFAFLLFRLCKFCCVFCCALCNV.

It localises to the membrane. This is an uncharacterized protein from Dictyostelium discoideum (Social amoeba).